The chain runs to 180 residues: Superoxide dismutase [Cu-Zn] (180 aa).

The first 19 residues, 1–19, serve as a signal peptide directing secretion; sequence MFMNLLTQVSNAIFPQVEA. Residues H68, H70, and H85 each contribute to the Cu cation site. A disulfide bridge connects residues C79 and C171. The Zn(2+) site is built by H85, H93, H102, and D105. H142 serves as a coordination point for Cu cation.

Belongs to the Cu-Zn superoxide dismutase family. As to quaternary structure, homodimer. The cofactor is Cu cation. Zn(2+) is required as a cofactor.

The protein localises to the cytoplasm. The enzyme catalyses 2 superoxide + 2 H(+) = H2O2 + O2. Its activity is regulated as follows. The insertion of copper which activates the protein requires glutathione. This is independent of copper chaperone for SOD1 (CCS), which activates orthologs. Functionally, protects cells against oxidative stress by converting superoxide radicals to hydrogen peroxide. Required for normal brood size. May be involved in regulating mpk-1 phosphorylation downstream of phosphatase ptp-2 during oocyte maturation. This is Superoxide dismutase [Cu-Zn] (sod-1) from Caenorhabditis elegans.